We begin with the raw amino-acid sequence, 297 residues long: Aspartate carbamoyltransferase catalytic subunit (297 aa).

Positions 51 and 52 each coordinate carbamoyl phosphate. Position 79 (lysine 79) interacts with L-aspartate. Carbamoyl phosphate is bound by residues arginine 101, histidine 130, and glutamine 133. The L-aspartate site is built by arginine 163 and arginine 215. Glycine 256 and proline 257 together coordinate carbamoyl phosphate.

The protein belongs to the aspartate/ornithine carbamoyltransferase superfamily. ATCase family. As to quaternary structure, heterododecamer (2C3:3R2) of six catalytic PyrB chains organized as two trimers (C3), and six regulatory PyrI chains organized as three dimers (R2).

The catalysed reaction is carbamoyl phosphate + L-aspartate = N-carbamoyl-L-aspartate + phosphate + H(+). The protein operates within pyrimidine metabolism; UMP biosynthesis via de novo pathway; (S)-dihydroorotate from bicarbonate: step 2/3. Its function is as follows. Catalyzes the condensation of carbamoyl phosphate and aspartate to form carbamoyl aspartate and inorganic phosphate, the committed step in the de novo pyrimidine nucleotide biosynthesis pathway. The sequence is that of Aspartate carbamoyltransferase catalytic subunit from Ehrlichia ruminantium (strain Gardel).